A 109-amino-acid polypeptide reads, in one-letter code: DNA-binding protein Mpal_0536 (109 aa).

The disordered stretch occupies residues 14–35 (MAQLQSQQMDQQQMDEEKQRAK). Residues 16–25 (QLQSQQMDQQ) show a composition bias toward low complexity.

The protein belongs to the PDCD5 family.

This Methanosphaerula palustris (strain ATCC BAA-1556 / DSM 19958 / E1-9c) protein is DNA-binding protein Mpal_0536.